A 611-amino-acid chain; its full sequence is Putative type II restriction enzyme HgiDII (611 aa).

Positions 355–364 (YPSNPKKEEV) are enriched in basic and acidic residues. The segment at 355–434 (YPSNPKKEEV…PEPSPPPKQE (80 aa)) is disordered. Over residues 381–409 (TNASSDSSTATENASSDSSTATENASSET) the composition is skewed to low complexity. 2 tandem repeats follow at residues 382–392 (NASSDSSTATE) and 393–403 (NASSDSSTATE). The interval 382-403 (NASSDSSTATENASSDSSTATE) is 2.5 X 11 AA tandem repeats. One copy of the 3; truncated repeat lies at 404–409 (NASSET). Acidic residues predominate over residues 410–425 (NDGEVEDNSFFDDDIP).

The catalysed reaction is Endonucleolytic cleavage of DNA to give specific double-stranded fragments with terminal 5'-phosphates.. According to REBASE this is a P subtype restriction enzyme that recognizes the double-stranded sequence 5'-GTCGAC-3' and cleaves after G-1. No restriction activity was detected upon overexpressing this protein in E.coli. This Herpetosiphon aurantiacus (Herpetosiphon giganteus) protein is Putative type II restriction enzyme HgiDII.